The primary structure comprises 423 residues: Glutamate-1-semialdehyde 2,1-aminomutase (423 aa).

Lysine 266 carries the N6-(pyridoxal phosphate)lysine modification.

Belongs to the class-III pyridoxal-phosphate-dependent aminotransferase family. HemL subfamily. Homodimer. Pyridoxal 5'-phosphate serves as cofactor.

It localises to the cytoplasm. It carries out the reaction (S)-4-amino-5-oxopentanoate = 5-aminolevulinate. It functions in the pathway porphyrin-containing compound metabolism; protoporphyrin-IX biosynthesis; 5-aminolevulinate from L-glutamyl-tRNA(Glu): step 2/2. This Nitratidesulfovibrio vulgaris (strain DP4) (Desulfovibrio vulgaris) protein is Glutamate-1-semialdehyde 2,1-aminomutase.